The following is a 57-amino-acid chain: Small ribosomal subunit protein eS27 (57 aa).

Positions 10, 13, 29, and 32 each coordinate Zn(2+). Residues 10–32 (CPDCENEQSLFEKAASEVSCAVC) form a C4-type zinc finger.

This sequence belongs to the eukaryotic ribosomal protein eS27 family. Part of the 30S ribosomal subunit. The cofactor is Zn(2+).

This Haloarcula marismortui (strain ATCC 43049 / DSM 3752 / JCM 8966 / VKM B-1809) (Halobacterium marismortui) protein is Small ribosomal subunit protein eS27.